The following is a 503-amino-acid chain: Mitogen-activated protein kinase kinae mkk2 (503 aa).

A disordered region spans residues 1–130 (MSSSPVPLLR…ASGPASASSS (130 aa)). A compositionally biased stretch (pro residues) spans 53-66 (APQPQRPSTRPAPP). The span at 100–115 (TGLNESTGHSRSSSFT) shows a compositional bias: polar residues. Positions 121–130 (ASGPASASSS) are enriched in low complexity. The region spanning 211-481 (IIELGSLGEG…PWRMLEHPWM (271 aa)) is the Protein kinase domain. ATP contacts are provided by residues 217–225 (LGEGAGGAV) and lysine 240. The active-site Proton acceptor is aspartate 338.

It belongs to the protein kinase superfamily. STE Ser/Thr protein kinase family. MAP kinase kinase subfamily.

The enzyme catalyses L-seryl-[protein] + ATP = O-phospho-L-seryl-[protein] + ADP + H(+). The catalysed reaction is L-threonyl-[protein] + ATP = O-phospho-L-threonyl-[protein] + ADP + H(+). In terms of biological role, mitogen-activated kinase kinase (MAPKK), part of the cell wall integrity (CWI) signaling pathway composed by three protein kinases bck1, mkk2 and mpkA and responsible for the maintaining of cell-wall integrity balance. The CWI pathway also regulates the oxidative stress response, as well as the production of some secondary metabolites including pyomelanin. The polypeptide is Mitogen-activated protein kinase kinae mkk2 (Aspergillus fumigatus (strain CBS 144.89 / FGSC A1163 / CEA10) (Neosartorya fumigata)).